The primary structure comprises 289 residues: Phycobilisome 39 kDa linker polypeptide, phycocyanin-associated, rod (289 aa).

The PBS-linker domain occupies 2 to 180 (PITSAASRLG…LYRGYANSDR (179 aa)). The segment at 213-233 (SYLPSKQGTAPSRTFGRSSQG) is disordered. Positions 216-233 (PSKQGTAPSRTFGRSSQG) are enriched in polar residues. The CpcD-like domain maps to 236–288 (PRLYRIEVTGISLPRYPKVRRSNKEFIVPYEQLSSTLQQINKLGGKVASITFA).

It belongs to the phycobilisome linker protein family.

It is found in the cellular thylakoid membrane. Rod linker protein, associated with phycocyanin. Linker polypeptides determine the state of aggregation and the location of the disk-shaped phycobiliprotein units within the phycobilisome and modulate their spectroscopic properties in order to mediate a directed and optimal energy transfer. This chain is Phycobilisome 39 kDa linker polypeptide, phycocyanin-associated, rod (cpcI2), found in Microchaete diplosiphon (Fremyella diplosiphon).